The following is a 147-amino-acid chain: Allograft inflammatory factor 1 (147 aa).

Residue serine 2 is modified to N-acetylserine. Lysine 11 is modified (N6-acetyllysine). A Phosphoserine modification is found at serine 39. EF-hand domains are found at residues 45–80 and 81–115; these read SKLE…LGVP and KTHL…GKRS. Residues aspartate 58, asparagine 60, asparagine 62, aspartate 64, threonine 100, and aspartate 105 each contribute to the Ca(2+) site. Residues 128–147 form a disordered region; sequence AREKEKPTGPPAKKAISELP.

In terms of assembly, homodimer (Potential). Monomer. Interacts with LCP1. Post-translationally, phosphorylated on serine residues.

Its subcellular location is the cytoplasm. It localises to the cytoskeleton. It is found in the cell projection. The protein localises to the ruffle membrane. The protein resides in the phagocytic cup. Functionally, actin-binding protein that enhances membrane ruffling and RAC activation. Enhances the actin-bundling activity of LCP1. Binds calcium. Plays a role in RAC signaling and in phagocytosis. May play a role in macrophage activation and function. Promotes the proliferation of vascular smooth muscle cells and of T-lymphocytes. Enhances lymphocyte migration. Plays a role in vascular inflammation. The protein is Allograft inflammatory factor 1 (AIF1) of Macaca mulatta (Rhesus macaque).